The chain runs to 618 residues: Proline--tRNA ligase (618 aa).

It belongs to the class-II aminoacyl-tRNA synthetase family. ProS type 1 subfamily. Homodimer.

The protein localises to the cytoplasm. The enzyme catalyses tRNA(Pro) + L-proline + ATP = L-prolyl-tRNA(Pro) + AMP + diphosphate. Its function is as follows. Catalyzes the attachment of proline to tRNA(Pro) in a two-step reaction: proline is first activated by ATP to form Pro-AMP and then transferred to the acceptor end of tRNA(Pro). As ProRS can inadvertently accommodate and process non-cognate amino acids such as alanine and cysteine, to avoid such errors it has two additional distinct editing activities against alanine. One activity is designated as 'pretransfer' editing and involves the tRNA(Pro)-independent hydrolysis of activated Ala-AMP. The other activity is designated 'posttransfer' editing and involves deacylation of mischarged Ala-tRNA(Pro). The misacylated Cys-tRNA(Pro) is not edited by ProRS. The polypeptide is Proline--tRNA ligase (Streptococcus equi subsp. zooepidemicus (strain H70)).